Consider the following 92-residue polypeptide: UPF0298 protein BH2594 (92 aa).

Belongs to the UPF0298 family.

Its subcellular location is the cytoplasm. The sequence is that of UPF0298 protein BH2594 from Halalkalibacterium halodurans (strain ATCC BAA-125 / DSM 18197 / FERM 7344 / JCM 9153 / C-125) (Bacillus halodurans).